The primary structure comprises 102 residues: Small ribosomal subunit protein uS10 (102 aa).

It belongs to the universal ribosomal protein uS10 family. In terms of assembly, part of the 30S ribosomal subunit.

Functionally, involved in the binding of tRNA to the ribosomes. The chain is Small ribosomal subunit protein uS10 from Paramagnetospirillum magneticum (strain ATCC 700264 / AMB-1) (Magnetospirillum magneticum).